The following is a 94-amino-acid chain: Enhancer of yellow 2 transcription factor (94 aa).

Belongs to the ENY2 family. In terms of assembly, component of the nuclear pore complex (NPC)-associated AMEX complex (anchoring and mRNA export complex), composed of at least e(y)2 and xmas-2. Component of the SAGA transcription coactivator-HAT complexes, at least composed of Ada2b, e(y)2, Pcaf/Gcn5, Taf10 and Nipped-A/Trrap. Within the SAGA complex, e(y)2, Sgf11, and not/nonstop form an additional subcomplex of SAGA called the DUB module (deubiquitination module). Component of the THO complex, composed of at least e(y)2, HPR1, THO2, THOC5, THOC6 and THOC7. Interacts with e(y)1. Interacts with su(Hw) (via zinc fingers). Interacts with xmas-2; required for localization to the nuclear periphery. Interacts with the nuclear pore complex (NPC).

It is found in the nucleus. It localises to the nucleoplasm. The protein localises to the cytoplasm. In terms of biological role, involved in mRNA export coupled transcription activation by association with both the AMEX and the SAGA complexes. The SAGA complex is a multiprotein complex that activates transcription by remodeling chromatin and mediating histone acetylation and deubiquitination. Within the SAGA complex, participates in a subcomplex that specifically deubiquitinates histone H2B. The SAGA complex is recruited to specific gene promoters by activators, where it is required for transcription. Required for nuclear receptor-mediated transactivation. Involved in transcription elongation by recruiting the THO complex onto nascent mRNA. The AMEX complex functions in docking export-competent ribonucleoprotein particles (mRNPs) to the nuclear entrance of the nuclear pore complex (nuclear basket). AMEX participates in mRNA export and accurate chromatin positioning in the nucleus by tethering genes to the nuclear periphery. This chain is Enhancer of yellow 2 transcription factor, found in Drosophila mojavensis (Fruit fly).